The following is a 452-amino-acid chain: Gamma-aminobutyric acid receptor subunit delta (452 aa).

A signal peptide spans 1–24; sequence MDAPARLLAPLLLLCAQQLRGTRA. Topologically, residues 25-251 are extracellular; it reads MNDIGDYVGS…HLRRNRGVYI (227 aa). 2 N-linked (GlcNAc...) asparagine glycosylation sites follow: Asn-103 and Asn-106. Cys-164 and Cys-178 are disulfide-bonded. Residues 252–271 traverse the membrane as a helical segment; that stretch reads IQSYMPSVLLVAMSWVSFWI. Residues 272 to 275 are Cytoplasmic-facing; the sequence is SQAA. A helical transmembrane segment spans residues 276–298; sequence VPARVSLGITTVLTMTTLMVSAR. At 299–308 the chain is on the extracellular side; it reads SSLPRASAIK. The helical transmembrane segment at 309–331 threads the bilayer; sequence ALDVYFWICYVFVFAALVEYAFA. The Cytoplasmic segment spans residues 332-426; it reads HFNADYRKKQ…ARLRPIDADT (95 aa). Ser-390 carries the phosphoserine modification. Residues 427–449 traverse the membrane as a helical segment; the sequence is IDIYARAVFPAAFAAVNVIYWAA. The Extracellular segment spans residues 450-452; sequence YAM.

This sequence belongs to the ligand-gated ion channel (TC 1.A.9) family. Gamma-aminobutyric acid receptor (TC 1.A.9.5) subfamily. GABRD sub-subfamily. In terms of assembly, heteropentamer, formed by a combination of alpha (GABRA1-6), beta (GABRB1-3), gamma (GABRG1-3), delta (GABRD), epsilon (GABRE), rho (GABRR1-3), pi (GABRP) and theta (GABRQ) chains, each subunit exhibiting distinct physiological and pharmacological properties.

The protein resides in the cell membrane. It catalyses the reaction chloride(in) = chloride(out). Delta subunit of the heteropentameric ligand-gated chloride channel gated by gamma-aminobutyric acid (GABA), a major inhibitory neurotransmitter in the brain. GABA-gated chloride channels, also named GABA(A) receptors (GABAAR), consist of five subunits arranged around a central pore and contain GABA active binding site(s) located at the alpha and beta subunit interface(s). When activated by GABA, GABAARs selectively allow the flow of chloride anions across the cell membrane down their electrochemical gradient. GABAARs containing delta/GABRD subunits are predominantly located in extrasynaptic or perisynaptic positions on hippocampus and cerebellar granule cells, and contribute to the tonic GABAergic inhibition. GABAAR containing alpha-4-beta-3-delta subunits can simultaneously bind GABA and histamine where histamine binds at the interface of two neighboring beta subunits, which may be involved in the regulation of sleep and wakefulness. In Homo sapiens (Human), this protein is Gamma-aminobutyric acid receptor subunit delta.